The chain runs to 473 residues: Photosystem II CP43 reaction center protein (473 aa).

The propeptide occupies 1 to 14; that stretch reads MKTLYSLRRFYHVE. Threonine 15 is subject to N-acetylthreonine. A Phosphothreonine modification is found at threonine 15. 5 consecutive transmembrane segments (helical) span residues 69–93, 134–155, 178–200, 255–275, and 291–312; these read LFEV…PHLA, LLGP…KDRN, KAFY…RKIT, KPFA…LSYS, and WFNN…ASQA. Glutamate 367 contributes to the [CaMn4O5] cluster binding site. Residues 447 to 471 traverse the membrane as a helical segment; it reads RARAAAAGFEKGIDRDFEPVLSMTP.

This sequence belongs to the PsbB/PsbC family. PsbC subfamily. As to quaternary structure, PSII is composed of 1 copy each of membrane proteins PsbA, PsbB, PsbC, PsbD, PsbE, PsbF, PsbH, PsbI, PsbJ, PsbK, PsbL, PsbM, PsbT, PsbX, PsbY, PsbZ, Psb30/Ycf12, at least 3 peripheral proteins of the oxygen-evolving complex and a large number of cofactors. It forms dimeric complexes. Binds multiple chlorophylls and provides some of the ligands for the Ca-4Mn-5O cluster of the oxygen-evolving complex. It may also provide a ligand for a Cl- that is required for oxygen evolution. PSII binds additional chlorophylls, carotenoids and specific lipids. is required as a cofactor.

The protein localises to the plastid. Its subcellular location is the chloroplast thylakoid membrane. One of the components of the core complex of photosystem II (PSII). It binds chlorophyll and helps catalyze the primary light-induced photochemical processes of PSII. PSII is a light-driven water:plastoquinone oxidoreductase, using light energy to abstract electrons from H(2)O, generating O(2) and a proton gradient subsequently used for ATP formation. The protein is Photosystem II CP43 reaction center protein of Pisum sativum (Garden pea).